The primary structure comprises 406 residues: Putative phosphate permease TK2061 (406 aa).

Helical transmembrane passes span Ala2–Ile22, Ala45–Thr65, Thr82–Ala102, Ile115–Gly135, Gln139–Phe159, Phe182–Gly202, Gly208–Leu228, Val288–Thr308, Leu324–Leu346, and Phe385–Val405.

This sequence belongs to the inorganic phosphate transporter (PiT) (TC 2.A.20) family.

It is found in the cell membrane. Its function is as follows. Potential transporter for phosphate. The polypeptide is Putative phosphate permease TK2061 (Thermococcus kodakarensis (strain ATCC BAA-918 / JCM 12380 / KOD1) (Pyrococcus kodakaraensis (strain KOD1))).